Consider the following 472-residue polypeptide: MSTREGSLWGGRFADGPSDALAALSKSTHFDWVLAPYDIVASRAHTVILYRAGLLSEEQRDGLLAGLDSLAEDVADGSFTPLVTDEDVHAALERGLIDRVGPDLGGRLRAGRSRNDQVATLFRMWLRDAVRRVAAGALDVVGALVAQAAAHPEAIMPGKTHLQSAQPVLLAHHLLAHAHPLLRDVDRIVDFDKRAAVSPYGSGALAGSSLGLDPDAIAAELGFASAADNSIDATASRDFAAEAAFVFAMIGVDLSRLAEDVILWSSTEFGYVKLHDAWSTGSSIMPQKKNPDIAELARGKSGRLIGNLAGLLATLKAQPLAYNRDLQEDKEPVFDAVAQLELVLPAMAGLVGSLTFDVQRMAALAPAGYTLATDIAEWLVRQGVPFRSAHEAAGAAVRAAEQRAVGLDELTDDELAAISPALTPQVREVLTIEGSVSSRDARGGTAPARVAEQIDTVAATAARLRERLGGPA.

The protein belongs to the lyase 1 family. Argininosuccinate lyase subfamily.

Its subcellular location is the cytoplasm. It carries out the reaction 2-(N(omega)-L-arginino)succinate = fumarate + L-arginine. Its pathway is amino-acid biosynthesis; L-arginine biosynthesis; L-arginine from L-ornithine and carbamoyl phosphate: step 3/3. The sequence is that of Argininosuccinate lyase from Mycolicibacterium paratuberculosis (strain ATCC BAA-968 / K-10) (Mycobacterium paratuberculosis).